The sequence spans 237 residues: Purine nucleoside phosphorylase DeoD-type (237 aa).

H4 contributes to the a purine D-ribonucleoside binding site. Phosphate contacts are provided by residues G20, R24, R43, and 87-90 (RVGT). Residues 179-181 (EME) and 203-204 (SD) contribute to the a purine D-ribonucleoside site. D204 functions as the Proton donor in the catalytic mechanism.

This sequence belongs to the PNP/UDP phosphorylase family. In terms of assembly, homohexamer; trimer of homodimers.

It catalyses the reaction a purine D-ribonucleoside + phosphate = a purine nucleobase + alpha-D-ribose 1-phosphate. The enzyme catalyses a purine 2'-deoxy-D-ribonucleoside + phosphate = a purine nucleobase + 2-deoxy-alpha-D-ribose 1-phosphate. Its function is as follows. Catalyzes the reversible phosphorolytic breakdown of the N-glycosidic bond in the beta-(deoxy)ribonucleoside molecules, with the formation of the corresponding free purine bases and pentose-1-phosphate. The protein is Purine nucleoside phosphorylase DeoD-type of Streptococcus pyogenes serotype M5 (strain Manfredo).